We begin with the raw amino-acid sequence, 96 residues long: Small ribosomal subunit protein bS16 (96 aa).

Belongs to the bacterial ribosomal protein bS16 family.

The protein is Small ribosomal subunit protein bS16 of Anaplasma phagocytophilum (strain HZ).